The following is a 367-amino-acid chain: Germination protease (367 aa).

Residues 1-13 constitute a propeptide that is removed on maturation; that stretch reads MEEQQIPFQVRTD. The segment at 267–287 is disordered; it reads KDDPSKSLTPAGMSFGNRKLT.

The protein belongs to the peptidase A25 family. In terms of assembly, homotetramer. Autoproteolytically processed. The inactive tetrameric zymogen termed p46 autoprocesses to a smaller form termed p41, which is active only during spore germination.

It catalyses the reaction Endopeptidase action with P4 Glu or Asp, P1 preferably Glu &gt; Asp, P1' hydrophobic and P2' Ala.. Initiates the rapid degradation of small, acid-soluble proteins during spore germination. This chain is Germination protease, found in Oceanobacillus iheyensis (strain DSM 14371 / CIP 107618 / JCM 11309 / KCTC 3954 / HTE831).